Reading from the N-terminus, the 478-residue chain is MSAMTSDTLTFECETGNYHTFCPISCVAWLYQKIEDSFFLVIGTKTCGYFLQNALGVMIFAEPRYAMAELEEGDISAQLNDYQELKRLCTQIKQDRNPSVIVWIGTCTTEIIKMDLEGMAPKIEQEIKIPIVVARANGLDYAFTQGEDTVLAAMVERCPGETKLSEQSQDKGSSKQNFSSTKGLFSILNFNKKAAADTQPQEAEDYIDHPPLVLFGSLPGPVVSQLTLELKRQKIKVSGWLPSQRYTDLPAVGKGVYVCGVNPFLSRTATILMRRRKCKLIGAPFPIGPDGTRAWVEKICSVFNVEPIGLAERENKIWEGLEDYLQLVRGKSVFFMGDNLLEVSLARFLTRCGMIVYEIGIPYMDKRYQAAELALLEKTCQEMGVPMPRIVEKPDNYNQIQRIRELQPDLAITGMAHANPLEARGISTKWSVEFTFAQIHGFTNARDILELVTRPLRRNNSLEGLGWTSLVKEGVLSN.

The [4Fe-4S] cluster site is built by Cys22, Cys47, and Cys107.

It belongs to the BchN/ChlN family. In terms of assembly, protochlorophyllide reductase is composed of three subunits; ChlL, ChlN and ChlB. Forms a heterotetramer of two ChlB and two ChlN subunits. The cofactor is [4Fe-4S] cluster.

It is found in the plastid. The protein localises to the chloroplast. It catalyses the reaction chlorophyllide a + oxidized 2[4Fe-4S]-[ferredoxin] + 2 ADP + 2 phosphate = protochlorophyllide a + reduced 2[4Fe-4S]-[ferredoxin] + 2 ATP + 2 H2O. It participates in porphyrin-containing compound metabolism; chlorophyll biosynthesis (light-independent). In terms of biological role, component of the dark-operative protochlorophyllide reductase (DPOR) that uses Mg-ATP and reduced ferredoxin to reduce ring D of protochlorophyllide (Pchlide) to form chlorophyllide a (Chlide). This reaction is light-independent. The NB-protein (ChlN-ChlB) is the catalytic component of the complex. In Chlorokybus atmophyticus (Soil alga), this protein is Light-independent protochlorophyllide reductase subunit N.